Here is a 143-residue protein sequence, read N- to C-terminus: MSTVPSVQTFGKKKSATAVAHVKAGKGLIKVNGSPITLVQPEILRFKVYEPLLLVGLDKFANIDIRVKVTGGGHVSQVYAIRQAIAKGLVAYHQKFVDEQSKNELKKAFTSYDRTLLIADSRRPEPKKFGGRGARSRFQKSYR.

Positions 123-143 (RPEPKKFGGRGARSRFQKSYR) are disordered. A compositionally biased stretch (basic residues) spans 134 to 143 (ARSRFQKSYR).

The protein belongs to the universal ribosomal protein uS9 family.

The polypeptide is Small ribosomal subunit protein uS9 (RPS16) (Kluyveromyces lactis (strain ATCC 8585 / CBS 2359 / DSM 70799 / NBRC 1267 / NRRL Y-1140 / WM37) (Yeast)).